A 790-amino-acid chain; its full sequence is MRTYRYFLLLFWVGQPYPTFSTPLSKRTSGFPAKKRTLELSGNSKNELSRSKRSWMWNQFFLLEEYTGSDYQYVGKLHSDQDRGDGSLKYILSGDGAGDLFIINENTGDIQATKRLDREEKPVYILRAQAINRKTGRPVEPESEFIIKIHDINDNEPIFTKEVYTATVPEMSDVGTFVVQVTATDADDPTYGNSAKVVYSILQGQPYFSVESETGIIKTALLNMDRENREQYQVVIQAKDMGGQMGGLSGTTTVNITLTDVNDNPPRFPQSTYQFKTPESSPPGTPIGRIKASDADVGENAEIEYSITEGEGLDMFDVITDQETQEGIITVKKLLDFEKKKVYTLKVEASNPHVEPRFLYLGPFKDSATVRIMVEDVDEPPVFSKLAYILQIREDAQINTTIGSVTAQDPDAARNPVKYSVDRHTDMDRIFNIDSGNGSIFTSKLLDRETLLWHNITVIATEINNPKQSSRVPLYIKVLDVNDNPPEFAEFYETFVCEKAKADQLIQTLRAIDKDDPYSGHQFSFSLAPEAASGSNFTIQDNKDNTAGIFTRKNGYNRHEMSTYLLPVVISDNDYPVQSSTGTVTVRVCACDHQGNMQSCHAEALVHPTGLSTGALIAILLCIVTLLVTVVLFAALRRQRKKEPLIISKEDIRDNIVSYNDEGGGEEDTQAFDIGTLRNPEAIEDSKLRRDIVPEALFLPRRTPAARDNTDVRDFINQRLKENDTDPTAPPYDSLATYAYEGAGSVADSLSSLESVTTDGDQDYDYLSDWGPRFKKLADMYGGVDSDKDS.

A signal peptide spans 1–18 (MRTYRYFLLLFWVGQPYP). Positions 19-53 (TFSTPLSKRTSGFPAKKRTLELSGNSKNELSRSKR) are excised as a propeptide. Cadherin domains lie at 54–159 (SWMW…EPIF), 160–268 (TKEV…PPRF), 269–383 (PQST…PPVF), 384–486 (SKLA…DNPP), and 487–608 (EFAE…LVHP). Topologically, residues 54–615 (SWMWNQFFLL…VHPTGLSTGA (562 aa)) are extracellular. N255 is a glycosylation site (N-linked (GlcNAc...) asparagine). The segment at 261 to 291 (VNDNPPRFPQSTYQFKTPESSPPGTPIGRIK) is disordered. Residues 269–279 (PQSTYQFKTPE) show a composition bias toward polar residues. N-linked (GlcNAc...) asparagine glycans are attached at residues N399, N437, N455, and N536. Residues 616–636 (LIAILLCIVTLLVTVVLFAAL) traverse the membrane as a helical segment. The Cytoplasmic portion of the chain corresponds to 637–790 (RRQRKKEPLI…YGGVDSDKDS (154 aa)). S786 and S790 each carry phosphoserine.

It is found in the cell membrane. Functionally, cadherins are calcium-dependent cell adhesion proteins. They preferentially interact with themselves in a homophilic manner in connecting cells; cadherins may thus contribute to the sorting of heterogeneous cell types. The sequence is that of Cadherin-6 (CDH6) from Bos taurus (Bovine).